The following is an 85-amino-acid chain: ATP synthase subunit c (85 aa).

The next 2 helical transmembrane spans lie at 10–30 (IAVA…FAVL) and 53–73 (FIIA…ALLF).

This sequence belongs to the ATPase C chain family. F-type ATPases have 2 components, F(1) - the catalytic core - and F(0) - the membrane proton channel. F(1) has five subunits: alpha(3), beta(3), gamma(1), delta(1), epsilon(1). F(0) has three main subunits: a(1), b(2) and c(10-14). The alpha and beta chains form an alternating ring which encloses part of the gamma chain. F(1) is attached to F(0) by a central stalk formed by the gamma and epsilon chains, while a peripheral stalk is formed by the delta and b chains.

It localises to the cell inner membrane. In terms of biological role, f(1)F(0) ATP synthase produces ATP from ADP in the presence of a proton or sodium gradient. F-type ATPases consist of two structural domains, F(1) containing the extramembraneous catalytic core and F(0) containing the membrane proton channel, linked together by a central stalk and a peripheral stalk. During catalysis, ATP synthesis in the catalytic domain of F(1) is coupled via a rotary mechanism of the central stalk subunits to proton translocation. Key component of the F(0) channel; it plays a direct role in translocation across the membrane. A homomeric c-ring of between 10-14 subunits forms the central stalk rotor element with the F(1) delta and epsilon subunits. The chain is ATP synthase subunit c from Vibrio cholerae serotype O1 (strain ATCC 39315 / El Tor Inaba N16961).